Reading from the N-terminus, the 73-residue chain is Toxin Td3 (73 aa).

Residues 1–7 (IGMVVEC) form the signal peptide. Positions 8–70 (KDGYLMGPDG…VWERATNRCG (63 aa)) constitute an LCN-type CS-alpha/beta domain. 4 cysteine pairs are disulfide-bonded: cysteine 18/cysteine 69, cysteine 22/cysteine 44, cysteine 30/cysteine 50, and cysteine 34/cysteine 52. Lysine 71 carries the lysine amide modification.

The protein belongs to the long (4 C-C) scorpion toxin superfamily. Sodium channel inhibitor family. Beta subfamily. In terms of tissue distribution, expressed by the venom gland.

The protein resides in the secreted. Beta toxins bind voltage-independently at site-4 of sodium channels (Nav) and shift the voltage of activation toward more negative potentials thereby affecting sodium channel activation and promoting spontaneous and repetitive firing. In Tityus discrepans (Venezuelan scorpion), this protein is Toxin Td3.